A 134-amino-acid polypeptide reads, in one-letter code: Profilin-4 (134 aa).

Cysteines 13 and 118 form a disulfide. An Involved in PIP2 interaction motif is present at residues 84–100; sequence AVIRGKKGSGGITIKKT. T114 is modified (phosphothreonine).

The protein belongs to the profilin family. Occurs in many kinds of cells as a complex with monomeric actin in a 1:1 ratio. Phosphorylated by MAP kinases.

It is found in the cytoplasm. The protein resides in the cytoskeleton. Binds to actin and affects the structure of the cytoskeleton. At high concentrations, profilin prevents the polymerization of actin, whereas it enhances it at low concentrations. This is Profilin-4 from Olea europaea (Common olive).